The sequence spans 430 residues: Trigger factor (430 aa).

Residues 163-248 form the PPIase FKBP-type domain; sequence GNIAIIDFKG…IKDIKVKELP (86 aa).

This sequence belongs to the FKBP-type PPIase family. Tig subfamily.

The protein localises to the cytoplasm. The catalysed reaction is [protein]-peptidylproline (omega=180) = [protein]-peptidylproline (omega=0). Functionally, involved in protein export. Acts as a chaperone by maintaining the newly synthesized protein in an open conformation. Functions as a peptidyl-prolyl cis-trans isomerase. In Clostridium botulinum (strain Loch Maree / Type A3), this protein is Trigger factor.